A 320-amino-acid chain; its full sequence is Cytochrome f (320 aa).

Positions 1-35 (MQTRKTLSWIKEEITRSISVSLMIYIITGAYISNA) are cleaved as a signal peptide. 4 residues coordinate heme: Tyr-36, Cys-56, Cys-59, and His-60. Residues 286-306 (VQGLLFFLASVILAQIFLVLK) form a helical membrane-spanning segment.

Belongs to the cytochrome f family. In terms of assembly, the 4 large subunits of the cytochrome b6-f complex are cytochrome b6, subunit IV (17 kDa polypeptide, petD), cytochrome f and the Rieske protein, while the 4 small subunits are PetG, PetL, PetM and PetN. The complex functions as a dimer. The cofactor is heme.

It localises to the plastid. The protein resides in the chloroplast thylakoid membrane. Its function is as follows. Component of the cytochrome b6-f complex, which mediates electron transfer between photosystem II (PSII) and photosystem I (PSI), cyclic electron flow around PSI, and state transitions. The polypeptide is Cytochrome f (Populus trichocarpa (Western balsam poplar)).